The chain runs to 607 residues: Discoidin-inducing complex subunit B (607 aa).

Positions Met1–Gly19 are cleaved as a signal peptide. Over Gln20–Ser554 the chain is Extracellular. N-linked (GlcNAc...) asparagine glycosylation is found at Asn75, Asn161, Asn215, Asn276, Asn277, Asn307, Asn324, Asn453, Asn477, and Asn527. The chain crosses the membrane as a helical span at residues Leu555–Trp575. Residues Lys576–Leu607 are Cytoplasmic-facing.

In terms of assembly, forms a complex with psiF/dicA.

It localises to the membrane. Its subcellular location is the secreted. Functionally, component of a complex that acts as a quorum sensing protein regulating discoidin gene expression during growth and development. Its function in the complex is unclear as it has no ability to induce discoidin during growth and development by itself. The chain is Discoidin-inducing complex subunit B (dicB) from Dictyostelium discoideum (Social amoeba).